A 349-amino-acid chain; its full sequence is 2-oxoglutarate and iron-dependent oxygenase domain-containing protein 2 (349 aa).

Residues 211–305 (DSHRAFVVKY…RWNLILWMRA (95 aa)) form the Fe2OG dioxygenase domain. 3 residues coordinate Fe cation: H231, D233, and H286. R296 provides a ligand contact to 2-oxoglutarate.

This sequence belongs to the OGFOD2 family. Fe(2+) serves as cofactor. The cofactor is L-ascorbate.

The sequence is that of 2-oxoglutarate and iron-dependent oxygenase domain-containing protein 2 (ogfod2) from Xenopus tropicalis (Western clawed frog).